The sequence spans 548 residues: Chaperonin GroEL (548 aa).

ATP contacts are provided by residues 30 to 33 (TLGP), Lys51, 87 to 91 (DGTTT), Gly415, 479 to 481 (NAA), and Asp495.

This sequence belongs to the chaperonin (HSP60) family. As to quaternary structure, forms a cylinder of 14 subunits composed of two heptameric rings stacked back-to-back. Interacts with the co-chaperonin GroES.

It localises to the cytoplasm. The enzyme catalyses ATP + H2O + a folded polypeptide = ADP + phosphate + an unfolded polypeptide.. In terms of biological role, together with its co-chaperonin GroES, plays an essential role in assisting protein folding. The GroEL-GroES system forms a nano-cage that allows encapsulation of the non-native substrate proteins and provides a physical environment optimized to promote and accelerate protein folding. In Escherichia fergusonii (strain ATCC 35469 / DSM 13698 / CCUG 18766 / IAM 14443 / JCM 21226 / LMG 7866 / NBRC 102419 / NCTC 12128 / CDC 0568-73), this protein is Chaperonin GroEL.